A 302-amino-acid chain; its full sequence is Heme A synthase (302 aa).

Topologically, residues 1–8 (MFRKQNLK) are cytoplasmic. Residues 9–29 (WLGVLATIIMTFVQLGGALVT) traverse the membrane as a helical segment. Residues 30–67 (KTGSEDGCGSSWPLCNGALLPENLPIQTIIELSHRAVS) lie on the Extracellular side of the membrane. A disulfide bridge connects residues Cys37 and Cys44. Glu60 is a catalytic residue. His63 contacts heme o. The chain crosses the membrane as a helical span at residues 68-88 (AISLIVVLWLVITAWKNIGYI). Over 89-93 (KEIKP) the chain is Cytoplasmic. The helical transmembrane segment at 94-114 (LSIISVGFLLVQALVGAAAVI) threads the bilayer. Topologically, residues 115-125 (WQQNPYVLALH) are extracellular. His125 provides a ligand contact to heme o. A helical transmembrane segment spans residues 126 to 146 (FGISLISFSSVFLMTLIIFSI). Residues 147-161 (DKKYEADILFIHKPL) are Cytoplasmic-facing. A helical transmembrane segment spans residues 162 to 182 (RILTWLMAIIVYLTIYTGALV). Residues 183–215 (RHTKSSLAYGAWPIPFDDIVPHNAHDWVQFSHR) are Extracellular-facing. His214 contributes to the heme b binding site. The chain crosses the membrane as a helical span at residues 216–236 (GMAFITFIWIMITFIHAIKNY). The Cytoplasmic segment spans residues 237–244 (SDNRTVRY). Residues 245–265 (GYTASFILVILQVITGALSVI) traverse the membrane as a helical segment. Residues 266–270 (TNVNL) are Extracellular-facing. A helical membrane pass occupies residues 271–291 (IIALFHALFITYLFGMIAYFI). His276 serves as a coordination point for heme b. Residues 292 to 302 (LLMLRTTRSLK) lie on the Cytoplasmic side of the membrane.

The protein belongs to the COX15/CtaA family. Type 1 subfamily. As to quaternary structure, interacts with CtaB. The cofactor is heme b.

The protein resides in the cell membrane. It catalyses the reaction Fe(II)-heme o + 2 A + H2O = Fe(II)-heme a + 2 AH2. The protein operates within porphyrin-containing compound metabolism; heme A biosynthesis; heme A from heme O: step 1/1. Its function is as follows. Catalyzes the conversion of heme O to heme A by two successive hydroxylations of the methyl group at C8. The first hydroxylation forms heme I, the second hydroxylation results in an unstable dihydroxymethyl group, which spontaneously dehydrates, resulting in the formyl group of heme A. The protein is Heme A synthase of Staphylococcus epidermidis (strain ATCC 12228 / FDA PCI 1200).